Reading from the N-terminus, the 275-residue chain is MPELPEVETTRRGIDTVITGRTLRRLVVREARMRWPIPPALPDLLAGRTVLECGRRGKYLLLRFDHGVQIVHLGMSGSLRRVPEQEAPRKHGHVDWVFDHAVLRLHDPRRFGAVLWHPDEAGPIAAHPLLARLGIEPFDPRFDGRWLHAYFRGRRVAIKQALLAGDAVVGVGNIYASESLFRAGIDPRTAAQRVSAARCDRLAAAIRATLSDALDSGGSTLRDYVGASGEPGAYFAIHAAVYERAGLPCRVCGAPIRRLVQGQRATYFCPSCQKR.

Pro-2 serves as the catalytic Schiff-base intermediate with DNA. The active-site Proton donor is the Glu-3. Residue Lys-58 is the Proton donor; for beta-elimination activity of the active site. His-91, Arg-109, and Arg-154 together coordinate DNA. The FPG-type zinc-finger motif lies at 240-274 (AVYERAGLPCRVCGAPIRRLVQGQRATYFCPSCQK). The active-site Proton donor; for delta-elimination activity is Arg-264.

It belongs to the FPG family. In terms of assembly, monomer. Zn(2+) is required as a cofactor.

It catalyses the reaction Hydrolysis of DNA containing ring-opened 7-methylguanine residues, releasing 2,6-diamino-4-hydroxy-5-(N-methyl)formamidopyrimidine.. The enzyme catalyses 2'-deoxyribonucleotide-(2'-deoxyribose 5'-phosphate)-2'-deoxyribonucleotide-DNA = a 3'-end 2'-deoxyribonucleotide-(2,3-dehydro-2,3-deoxyribose 5'-phosphate)-DNA + a 5'-end 5'-phospho-2'-deoxyribonucleoside-DNA + H(+). Involved in base excision repair of DNA damaged by oxidation or by mutagenic agents. Acts as a DNA glycosylase that recognizes and removes damaged bases. Has a preference for oxidized purines, such as 7,8-dihydro-8-oxoguanine (8-oxoG). Has AP (apurinic/apyrimidinic) lyase activity and introduces nicks in the DNA strand. Cleaves the DNA backbone by beta-delta elimination to generate a single-strand break at the site of the removed base with both 3'- and 5'-phosphates. This Bordetella parapertussis (strain 12822 / ATCC BAA-587 / NCTC 13253) protein is Formamidopyrimidine-DNA glycosylase.